Here is a 306-residue protein sequence, read N- to C-terminus: D-alanine--D-alanine ligase B (306 aa).

Catalysis depends on residues Glu-15 and Ser-150. The 203-residue stretch at 101–303 (KLLWQGAGLP…FSQLVVRILE (203 aa)) folds into the ATP-grasp domain. 134 to 189 (ISALGLPVIVKPSREGSSVGMSKVVAENALQDALRLAFQHDEEVLIEKWLSGPEFT) contacts ATP. Residues Asp-257, Glu-270, and Asn-272 each coordinate Mg(2+). Residue Ser-281 is part of the active site.

The protein belongs to the D-alanine--D-alanine ligase family. In terms of assembly, monomer. The cofactor is Mg(2+). Mn(2+) serves as cofactor.

The protein resides in the cytoplasm. It carries out the reaction 2 D-alanine + ATP = D-alanyl-D-alanine + ADP + phosphate + H(+). The protein operates within cell wall biogenesis; peptidoglycan biosynthesis. Its function is as follows. Cell wall formation. The protein is D-alanine--D-alanine ligase B (ddlB) of Escherichia coli (strain K12).